The sequence spans 163 residues: Endoribonuclease YbeY (163 aa).

Residues histidine 126, histidine 130, and histidine 136 each coordinate Zn(2+).

Belongs to the endoribonuclease YbeY family. It depends on Zn(2+) as a cofactor.

Its subcellular location is the cytoplasm. Functionally, single strand-specific metallo-endoribonuclease involved in late-stage 70S ribosome quality control and in maturation of the 3' terminus of the 16S rRNA. In Chelativorans sp. (strain BNC1), this protein is Endoribonuclease YbeY.